An 859-amino-acid polypeptide reads, in one-letter code: Leucine--tRNA ligase (859 aa).

The 'HIGH' region motif lies at 42–52 (PYPSGRLHMGH). The 'KMSKS' region motif lies at 618 to 622 (KMSKS). ATP is bound at residue lysine 621.

This sequence belongs to the class-I aminoacyl-tRNA synthetase family.

Its subcellular location is the cytoplasm. The catalysed reaction is tRNA(Leu) + L-leucine + ATP = L-leucyl-tRNA(Leu) + AMP + diphosphate. The chain is Leucine--tRNA ligase from Shewanella sp. (strain ANA-3).